Consider the following 489-residue polypeptide: Glycogen synthase (489 aa).

Arg-20 contacts ADP-alpha-D-glucose.

This sequence belongs to the glycosyltransferase 1 family. Bacterial/plant glycogen synthase subfamily.

The enzyme catalyses [(1-&gt;4)-alpha-D-glucosyl](n) + ADP-alpha-D-glucose = [(1-&gt;4)-alpha-D-glucosyl](n+1) + ADP + H(+). It functions in the pathway glycan biosynthesis; glycogen biosynthesis. Functionally, synthesizes alpha-1,4-glucan chains using ADP-glucose. The sequence is that of Glycogen synthase from Chlorobium phaeobacteroides (strain DSM 266 / SMG 266 / 2430).